The sequence spans 498 residues: Trichoplein keratin filament-binding protein (498 aa).

Residues 11–39 (CSQQRLNQQLARQREQEARLRQQWEQNSR) adopt a coiled-coil conformation. Glycyl lysine isopeptide (Lys-Gly) (interchain with G-Cter in ubiquitin) cross-links involve residues Lys-50 and Lys-57. Coiled coils occupy residues 66-136 (AYQR…LIAE), 163-353 (VNSW…LREE), and 380-479 (LTGR…EAET). The tract at residues 73–498 (KEEKRRSLEA…PYGHPKIAWN (426 aa)) is interaction with keratin proteins. The segment at 167 to 189 (EMQKEEKKQQEATAEQENKRYEN) is disordered. Residues 168-189 (MQKEEKKQQEATAEQENKRYEN) are compositionally biased toward basic and acidic residues. Residues 259–425 (KQMEAFRQKA…RELARREKEE (167 aa)) form a trichohyalin/plectin homology domain region. Residues 447-498 (QAWEADQQEEEEEEEARRVEQLSDALLQQEAETMAEQGYRPKPYGHPKIAWN) form a disordered region.

It belongs to the TCHP family. In terms of assembly, interacts specifically with keratin proteins including, KRT5, KRT6A, KRT8, KRT14, KRT16 and KRT18. Interacts with KCTD17. In terms of processing, ubiquitinated. Ubiquitination by the BCR(KCTD17) E3 ubiquitin ligase complex results in proteasomal degradation, and induces ciliogenesis. As to expression, expressed at high levels in normal urothelial and breast epithelial cells. Also expressed in the smooth muscle and endothelial cells. Reduced expression seen in advanced bladder and breast carcinomas (at protein level). Ubiquitous. Expressed at highest levels in the heart, skeletal muscle, kidney, liver and testis.

The protein resides in the cytoplasm. The protein localises to the cytoskeleton. It localises to the cell membrane. It is found in the mitochondrion. Its subcellular location is the cell junction. The protein resides in the desmosome. The protein localises to the microtubule organizing center. It localises to the centrosome. Its function is as follows. Tumor suppressor which has the ability to inhibit cell growth and be pro-apoptotic during cell stress. Inhibits cell growth in bladder and prostate cancer cells by a down-regulation of HSPB1 by inhibiting its phosphorylation. May act as a 'capping' or 'branching' protein for keratin filaments in the cell periphery. May regulate K8/K18 filament and desmosome organization mainly at the apical or peripheral regions of simple epithelial cells. Is a negative regulator of ciliogenesis. The sequence is that of Trichoplein keratin filament-binding protein from Homo sapiens (Human).